A 404-amino-acid polypeptide reads, in one-letter code: Phosphoribulokinase, chloroplastic (404 aa).

A chloroplast-targeting transit peptide spans methionine 1–cysteine 53. Cysteines 69 and 108 form a disulfide.

This sequence belongs to the phosphoribulokinase family.

It localises to the plastid. The protein resides in the chloroplast. The enzyme catalyses D-ribulose 5-phosphate + ATP = D-ribulose 1,5-bisphosphate + ADP + H(+). It functions in the pathway carbohydrate biosynthesis; Calvin cycle. With respect to regulation, light regulated via thioredoxin by reversible oxidation/reduction of sulfhydryl/disulfide groups. This chain is Phosphoribulokinase, chloroplastic, found in Triticum aestivum (Wheat).